Consider the following 246-residue polypeptide: tRNA (guanine-N(7)-)-methyltransferase (246 aa).

Residues Glu-77, Glu-102, Asp-129, and Asp-152 each contribute to the S-adenosyl-L-methionine site. Residue Asp-152 is part of the active site. Substrate contacts are provided by residues Lys-156, Asp-188, and 225-228 (TKFE).

It belongs to the class I-like SAM-binding methyltransferase superfamily. TrmB family.

The catalysed reaction is guanosine(46) in tRNA + S-adenosyl-L-methionine = N(7)-methylguanosine(46) in tRNA + S-adenosyl-L-homocysteine. It functions in the pathway tRNA modification; N(7)-methylguanine-tRNA biosynthesis. Catalyzes the formation of N(7)-methylguanine at position 46 (m7G46) in tRNA. The chain is tRNA (guanine-N(7)-)-methyltransferase from Haemophilus influenzae (strain PittEE).